Consider the following 229-residue polypeptide: Complex I assembly factor TMEM126B, mitochondrial (229 aa).

4 helical membrane passes run 71-91 (IRGT…ANLV), 109-129 (LTTL…TDAL), 140-160 (VLRS…ALAF), and 198-218 (VPLL…YAVC).

In terms of assembly, part of the mitochondrial complex I assembly/MCIA complex that comprises at least the core subunits TMEM126B, NDUFAF1, ECSIT and ACAD9 and complement subunits such as COA1 and TMEM186. Associates with the intermediate 370 kDa subcomplex of incompletely assembled complex I. Interacts with TMEM70.

It localises to the mitochondrion membrane. Its function is as follows. As part of the MCIA complex, involved in the assembly of the mitochondrial complex I. Participates in constructing the membrane arm of complex I. The chain is Complex I assembly factor TMEM126B, mitochondrial from Rattus norvegicus (Rat).